Consider the following 156-residue polypeptide: Lipoprotein signal peptidase (156 aa).

3 helical membrane passes run 5–25 (FKFIFYFWGAFVLVFALDQWV), 64–84 (YLHLALIVVLFIYLFWQKTLL), and 89–109 (IAFGMMLGAGVSNLLDRFIHG). Catalysis depends on residues aspartate 113 and aspartate 130. A helical transmembrane segment spans residues 122-142 (NFAIFNVADVMINISVALILI).

It belongs to the peptidase A8 family.

The protein localises to the cell inner membrane. It carries out the reaction Release of signal peptides from bacterial membrane prolipoproteins. Hydrolyzes -Xaa-Yaa-Zaa-|-(S,diacylglyceryl)Cys-, in which Xaa is hydrophobic (preferably Leu), and Yaa (Ala or Ser) and Zaa (Gly or Ala) have small, neutral side chains.. It functions in the pathway protein modification; lipoprotein biosynthesis (signal peptide cleavage). This protein specifically catalyzes the removal of signal peptides from prolipoproteins. This chain is Lipoprotein signal peptidase, found in Campylobacter jejuni subsp. jejuni serotype O:23/36 (strain 81-176).